The following is a 233-amino-acid chain: Phosphatidylserine decarboxylase proenzyme (233 aa).

Serine 190 (schiff-base intermediate with substrate; via pyruvic acid) is an active-site residue. Pyruvic acid (Ser); by autocatalysis is present on serine 190.

Belongs to the phosphatidylserine decarboxylase family. PSD-A subfamily. In terms of assembly, heterodimer of a large membrane-associated beta subunit and a small pyruvoyl-containing alpha subunit. Pyruvate serves as cofactor. In terms of processing, is synthesized initially as an inactive proenzyme. Formation of the active enzyme involves a self-maturation process in which the active site pyruvoyl group is generated from an internal serine residue via an autocatalytic post-translational modification. Two non-identical subunits are generated from the proenzyme in this reaction, and the pyruvate is formed at the N-terminus of the alpha chain, which is derived from the carboxyl end of the proenzyme. The post-translation cleavage follows an unusual pathway, termed non-hydrolytic serinolysis, in which the side chain hydroxyl group of the serine supplies its oxygen atom to form the C-terminus of the beta chain, while the remainder of the serine residue undergoes an oxidative deamination to produce ammonia and the pyruvoyl prosthetic group on the alpha chain.

The protein localises to the cell membrane. It catalyses the reaction a 1,2-diacyl-sn-glycero-3-phospho-L-serine + H(+) = a 1,2-diacyl-sn-glycero-3-phosphoethanolamine + CO2. The protein operates within phospholipid metabolism; phosphatidylethanolamine biosynthesis; phosphatidylethanolamine from CDP-diacylglycerol: step 2/2. In terms of biological role, catalyzes the formation of phosphatidylethanolamine (PtdEtn) from phosphatidylserine (PtdSer). This Bartonella quintana (strain Toulouse) (Rochalimaea quintana) protein is Phosphatidylserine decarboxylase proenzyme.